The primary structure comprises 537 residues: Glucans biosynthesis protein D 2 (537 aa).

Positions 1–28 form a signal peptide, tat-type signal; that stretch reads MVTRRHLLASASLSATLAALGITPEALA.

The protein belongs to the OpgD/OpgG family. Post-translationally, predicted to be exported by the Tat system. The position of the signal peptide cleavage has not been experimentally proven.

Its subcellular location is the periplasm. It functions in the pathway glycan metabolism; osmoregulated periplasmic glucan (OPG) biosynthesis. Functionally, probably involved in the control of the structural glucose backbone of osmoregulated periplasmic glucans (OPGs). In Ralstonia nicotianae (strain ATCC BAA-1114 / GMI1000) (Ralstonia solanacearum), this protein is Glucans biosynthesis protein D 2 (opgD2).